Consider the following 285-residue polypeptide: Sulfoquinovosyl glycerol transport system permease protein SmoH (285 aa).

6 consecutive transmembrane segments (helical) span residues 21 to 41 (FIAA…ILFT), 83 to 103 (FMVA…AAYA), 115 to 135 (ILSL…VPLF), 150 to 170 (LILP…VSFF), 195 to 215 (VVVP…FVNA), and 250 to 270 (PVIS…IVIF). Residues 79 to 270 (LFNSFMVALL…VPVAILIVIF (192 aa)) enclose the ABC transmembrane type-1 domain.

The protein belongs to the binding-protein-dependent transport system permease family. The complex is probably composed of two ATP-binding proteins (SmoE), two transmembrane proteins (SmoG and SmoH) and a solute-binding protein (SmoF).

It is found in the cell inner membrane. In terms of biological role, part of the ABC transporter complex SmoEFGH involved in sulfoquinovosyl glycerol (SQGro) uptake. Responsible for the translocation of the substrate across the membrane. This chain is Sulfoquinovosyl glycerol transport system permease protein SmoH, found in Agrobacterium fabrum (strain C58 / ATCC 33970) (Agrobacterium tumefaciens (strain C58)).